The primary structure comprises 173 residues: Crossover junction endodeoxyribonuclease RuvC (173 aa).

Residues D8, E67, and D139 contribute to the active site. Residues D8, E67, and D139 each coordinate Mg(2+).

This sequence belongs to the RuvC family. As to quaternary structure, homodimer which binds Holliday junction (HJ) DNA. The HJ becomes 2-fold symmetrical on binding to RuvC with unstacked arms; it has a different conformation from HJ DNA in complex with RuvA. In the full resolvosome a probable DNA-RuvA(4)-RuvB(12)-RuvC(2) complex forms which resolves the HJ. The cofactor is Mg(2+).

Its subcellular location is the cytoplasm. It carries out the reaction Endonucleolytic cleavage at a junction such as a reciprocal single-stranded crossover between two homologous DNA duplexes (Holliday junction).. The RuvA-RuvB-RuvC complex processes Holliday junction (HJ) DNA during genetic recombination and DNA repair. Endonuclease that resolves HJ intermediates. Cleaves cruciform DNA by making single-stranded nicks across the HJ at symmetrical positions within the homologous arms, yielding a 5'-phosphate and a 3'-hydroxyl group; requires a central core of homology in the junction. The consensus cleavage sequence is 5'-(A/T)TT(C/G)-3'. Cleavage occurs on the 3'-side of the TT dinucleotide at the point of strand exchange. HJ branch migration catalyzed by RuvA-RuvB allows RuvC to scan DNA until it finds its consensus sequence, where it cleaves and resolves the cruciform DNA. The protein is Crossover junction endodeoxyribonuclease RuvC of Shewanella sp. (strain MR-4).